Here is an 85-residue protein sequence, read N- to C-terminus: Putative transmembrane protein ORF85 (85 aa).

2 consecutive transmembrane segments (helical) span residues 12 to 32 (FPPT…KFLS) and 44 to 64 (LGII…GAGI).

Its subcellular location is the host membrane. The sequence is that of Putative transmembrane protein ORF85 from Acidianus convivator (ABV).